The chain runs to 396 residues: Elongation factor Tu (396 aa).

One can recognise a tr-type G domain in the interval 11–205; it reads KPHVNIGTIG…VVDEYIPTPK (195 aa). Residues 20–27 are G1; that stretch reads GHVDHGKT. 20 to 27 contacts GTP; the sequence is GHVDHGKT. Residue threonine 27 coordinates Mg(2+). Positions 61–65 are G2; the sequence is GITIN. The segment at 82-85 is G3; it reads DAPG. GTP-binding positions include 82–86 and 137–140; these read DAPGH and NKTD. The interval 137–140 is G4; the sequence is NKTD. Residues 175–177 form a G5 region; the sequence is SAL.

It belongs to the TRAFAC class translation factor GTPase superfamily. Classic translation factor GTPase family. EF-Tu/EF-1A subfamily. As to quaternary structure, monomer.

Its subcellular location is the cytoplasm. The catalysed reaction is GTP + H2O = GDP + phosphate + H(+). Its function is as follows. GTP hydrolase that promotes the GTP-dependent binding of aminoacyl-tRNA to the A-site of ribosomes during protein biosynthesis. This chain is Elongation factor Tu, found in Limosilactobacillus fermentum (strain NBRC 3956 / LMG 18251) (Lactobacillus fermentum).